Reading from the N-terminus, the 426-residue chain is 3-phosphoshikimate 1-carboxyvinyltransferase (426 aa).

3-phosphoshikimate-binding residues include K20, S21, and R25. K20 is a binding site for phosphoenolpyruvate. Positions 92 and 120 each coordinate phosphoenolpyruvate. S166, Q168, D312, and K339 together coordinate 3-phosphoshikimate. Q168 is a binding site for phosphoenolpyruvate. The Proton acceptor role is filled by D312. Positions 343 and 385 each coordinate phosphoenolpyruvate.

Belongs to the EPSP synthase family. Monomer.

The protein localises to the cytoplasm. The enzyme catalyses 3-phosphoshikimate + phosphoenolpyruvate = 5-O-(1-carboxyvinyl)-3-phosphoshikimate + phosphate. It participates in metabolic intermediate biosynthesis; chorismate biosynthesis; chorismate from D-erythrose 4-phosphate and phosphoenolpyruvate: step 6/7. Catalyzes the transfer of the enolpyruvyl moiety of phosphoenolpyruvate (PEP) to the 5-hydroxyl of shikimate-3-phosphate (S3P) to produce enolpyruvyl shikimate-3-phosphate and inorganic phosphate. The chain is 3-phosphoshikimate 1-carboxyvinyltransferase from Enterococcus faecalis (strain ATCC 700802 / V583).